The chain runs to 101 residues: Movement protein (101 aa).

The chain crosses the membrane as a helical span at residues 30–50 (EVAVLSFVALICIYLLYLWVL). Residues 78–101 (RSPIPNTLEPTAPVHPGPFVPGSG) form a disordered region. The span at 90 to 101 (PVHPGPFVPGSG) shows a compositional bias: pro residues.

The protein belongs to the mastrevirus movement protein family. Interacts with the capsid protein (CP). Part of a MP-CP-viral DNA complex.

It is found in the host membrane. Its function is as follows. Involved in the viral transport within, and between cells. This chain is Movement protein, found in Maize streak virus genotype E (isolate Pat) (MSV).